A 106-amino-acid chain; its full sequence is uncharacterized protein (106 aa).

3 helical membrane-spanning segments follow: residues 5–27, 42–64, and 76–98; these read IFVI…GIII, AVAA…LAYM, and LPYI…TNFF.

Its subcellular location is the cell membrane. This is an uncharacterized protein from Archaeoglobus fulgidus (strain ATCC 49558 / DSM 4304 / JCM 9628 / NBRC 100126 / VC-16).